Here is a 175-residue protein sequence, read N- to C-terminus: MSSQIRQNYSTEVEAAVNRLVNMHLRASYTYLSLGFYFDRDDVALEGVGHFFRELAEEKREGAERFLKMQNQRGGRALFQDVQKPSQDEWGKTLDAMEAALLLEKSLNQALLDLHALGSARADPHLCDFLENHFLDEEVKLIKKMGDHLTNLRRLATPQAGLGEYLFERLTLKHD.

Ser2 carries the post-translational modification N-acetylserine. A Ferritin-like diiron domain is found at 7 to 156 (QNYSTEVEAA…DHLTNLRRLA (150 aa)). Fe cation-binding residues include Glu54, Glu57, Glu58, Glu61, and Glu64.

This sequence belongs to the ferritin family. In terms of assembly, oligomer of 24 subunits. There are two types of subunits: L (light) chain and H (heavy) chain. The major chain can be light or heavy, depending on the species and tissue type. The functional molecule forms a roughly spherical shell with a diameter of 12 nm and contains a central cavity into which the insoluble mineral iron core is deposited. Interacts with NCOA4.

It localises to the cytoplasmic vesicle. It is found in the autophagosome. The protein resides in the cytoplasm. Its subcellular location is the autolysosome. Stores iron in a soluble, non-toxic, readily available form. Important for iron homeostasis. Iron is taken up in the ferrous form and deposited as ferric hydroxides after oxidation. Also plays a role in delivery of iron to cells. Mediates iron uptake in capsule cells of the developing kidney. Delivery to lysosomes by the cargo receptor NCOA4 for autophagic degradation and release or iron. In Canis lupus familiaris (Dog), this protein is Ferritin light chain (FTL).